Here is a 352-residue protein sequence, read N- to C-terminus: Quinolinate synthase (352 aa).

2 residues coordinate iminosuccinate: His48 and Ser69. Cys114 serves as a coordination point for [4Fe-4S] cluster. Residues 140–142 (YAN) and Ser157 each bind iminosuccinate. Cys201 lines the [4Fe-4S] cluster pocket. Iminosuccinate is bound by residues 227-229 (HPE) and Thr244. [4Fe-4S] cluster is bound at residue Cys298.

It belongs to the quinolinate synthase family. Type 1 subfamily. Requires [4Fe-4S] cluster as cofactor.

Its subcellular location is the cytoplasm. It catalyses the reaction iminosuccinate + dihydroxyacetone phosphate = quinolinate + phosphate + 2 H2O + H(+). The protein operates within cofactor biosynthesis; NAD(+) biosynthesis; quinolinate from iminoaspartate: step 1/1. Functionally, catalyzes the condensation of iminoaspartate with dihydroxyacetone phosphate to form quinolinate. The polypeptide is Quinolinate synthase (Pseudomonas entomophila (strain L48)).